The primary structure comprises 259 residues: Phosphatidylserine decarboxylase proenzyme (259 aa).

The active-site Schiff-base intermediate with substrate; via pyruvic acid is the S183. Residue S183 is modified to Pyruvic acid (Ser); by autocatalysis.

Belongs to the phosphatidylserine decarboxylase family. PSD-A subfamily. As to quaternary structure, heterodimer of a large membrane-associated beta subunit and a small pyruvoyl-containing alpha subunit. Pyruvate serves as cofactor. Is synthesized initially as an inactive proenzyme. Formation of the active enzyme involves a self-maturation process in which the active site pyruvoyl group is generated from an internal serine residue via an autocatalytic post-translational modification. Two non-identical subunits are generated from the proenzyme in this reaction, and the pyruvate is formed at the N-terminus of the alpha chain, which is derived from the carboxyl end of the proenzyme. The post-translation cleavage follows an unusual pathway, termed non-hydrolytic serinolysis, in which the side chain hydroxyl group of the serine supplies its oxygen atom to form the C-terminus of the beta chain, while the remainder of the serine residue undergoes an oxidative deamination to produce ammonia and the pyruvoyl prosthetic group on the alpha chain.

The protein resides in the cell membrane. It catalyses the reaction a 1,2-diacyl-sn-glycero-3-phospho-L-serine + H(+) = a 1,2-diacyl-sn-glycero-3-phosphoethanolamine + CO2. It participates in phospholipid metabolism; phosphatidylethanolamine biosynthesis; phosphatidylethanolamine from CDP-diacylglycerol: step 2/2. Functionally, catalyzes the formation of phosphatidylethanolamine (PtdEtn) from phosphatidylserine (PtdSer). This Neisseria gonorrhoeae (strain ATCC 700825 / FA 1090) protein is Phosphatidylserine decarboxylase proenzyme.